The sequence spans 456 residues: tRNA modification GTPase MnmE (456 aa).

3 residues coordinate (6S)-5-formyl-5,6,7,8-tetrahydrofolate: R24, E81, and K120. One can recognise a TrmE-type G domain in the interval 216-379 (GMTVVIAGRP…LRDHLKACMG (164 aa)). N226 contacts K(+). GTP contacts are provided by residues 226–231 (NAGKSS), 245–251 (TAIAGTT), 270–273 (DTAG), and 335–338 (NKAD). S230 contributes to the Mg(2+) binding site. K(+) contacts are provided by T245, I247, and T250. A Mg(2+)-binding site is contributed by T251. K456 contributes to the (6S)-5-formyl-5,6,7,8-tetrahydrofolate binding site.

The protein belongs to the TRAFAC class TrmE-Era-EngA-EngB-Septin-like GTPase superfamily. TrmE GTPase family. As to quaternary structure, homodimer. Heterotetramer of two MnmE and two MnmG subunits. The cofactor is K(+).

It is found in the cytoplasm. Its function is as follows. Exhibits a very high intrinsic GTPase hydrolysis rate. Involved in the addition of a carboxymethylaminomethyl (cmnm) group at the wobble position (U34) of certain tRNAs, forming tRNA-cmnm(5)s(2)U34. This is tRNA modification GTPase MnmE from Pseudomonas putida (strain W619).